A 738-amino-acid chain; its full sequence is Eukaryotic translation initiation factor 3 subunit B (738 aa).

Polar residues predominate over residues 1-10 (MAPSFENLSE). A disordered region spans residues 1–20 (MAPSFENLSEQDLHEEEEEE). Residues 40 to 126 (TFVVIDGLPV…HTLLVNKLMD (87 aa)) form the RRM domain. WD repeat units follow at residues 193-230 (AHWT…KQKQ), 232-289 (PHPF…RSFV), 301-342 (QPKK…LLGK), 454-494 (SLKD…SFFA), 511-554 (IEKK…EKND), and 569-607 (VDHY…HTFS). Residues 693–720 (EAYGLPEEADQPKAAKDAPTNTEDKGET) are disordered. The span at 702–720 (DQPKAAKDAPTNTEDKGET) shows a compositional bias: basic and acidic residues.

Belongs to the eIF-3 subunit B family. Component of the eukaryotic translation initiation factor 3 (eIF-3) complex.

It is found in the cytoplasm. Functionally, RNA-binding component of the eukaryotic translation initiation factor 3 (eIF-3) complex, which is involved in protein synthesis of a specialized repertoire of mRNAs and, together with other initiation factors, stimulates binding of mRNA and methionyl-tRNAi to the 40S ribosome. The eIF-3 complex specifically targets and initiates translation of a subset of mRNAs involved in cell proliferation. The polypeptide is Eukaryotic translation initiation factor 3 subunit B (prt1) (Emericella nidulans (strain FGSC A4 / ATCC 38163 / CBS 112.46 / NRRL 194 / M139) (Aspergillus nidulans)).